Reading from the N-terminus, the 295-residue chain is UDP-N-acetylenolpyruvoylglucosamine reductase (295 aa).

One can recognise an FAD-binding PCMH-type domain in the interval Lys23 to Gly188. Arg167 is a catalytic residue. Catalysis depends on Ser217, which acts as the Proton donor. The active site involves Glu287.

Belongs to the MurB family. The cofactor is FAD.

The protein resides in the cytoplasm. The catalysed reaction is UDP-N-acetyl-alpha-D-muramate + NADP(+) = UDP-N-acetyl-3-O-(1-carboxyvinyl)-alpha-D-glucosamine + NADPH + H(+). Its pathway is cell wall biogenesis; peptidoglycan biosynthesis. Its function is as follows. Cell wall formation. The chain is UDP-N-acetylenolpyruvoylglucosamine reductase from Streptococcus pyogenes serotype M49 (strain NZ131).